Consider the following 915-residue polypeptide: Probable dipeptidyl-aminopeptidase B (915 aa).

The segment at 1-82 (MAPPFTDDPE…GAFLGPPGVP (82 aa)) is disordered. At 1–94 (MAPPFTDDPE…RQPMDRGFRR (94 aa)) the chain is on the cytoplasmic side. Positions 15-32 (STSRLSQDSLSSVSTTSL) are enriched in low complexity. The span at 36–62 (RIQEEMDRDPSASRSARRDLLPATKDE) shows a compositional bias: basic and acidic residues. The chain crosses the membrane as a helical; Signal-anchor for type II membrane protein span at residues 95 to 115 (ILIIIGAVFVGAWLAGLGIFV). The Vacuolar segment spans residues 116–915 (LSGSYKHESD…IDTKKRRHVS (800 aa)). N-linked (GlcNAc...) asparagine glycans are attached at residues asparagine 355 and asparagine 577. Catalysis depends on serine 760, which acts as the Charge relay system. A glycan (N-linked (GlcNAc...) asparagine) is linked at asparagine 819. Residues aspartate 837 and histidine 870 each act as charge relay system in the active site.

This sequence belongs to the peptidase S9B family.

The protein resides in the vacuole membrane. The catalysed reaction is Release of an N-terminal dipeptide, Xaa-Yaa-|-Zaa-, from a polypeptide, preferentially when Yaa is Pro, provided Zaa is neither Pro nor hydroxyproline.. Type IV dipeptidyl-peptidase which removes N-terminal dipeptides sequentially from polypeptides having unsubstituted N-termini provided that the penultimate residue is proline. The protein is Probable dipeptidyl-aminopeptidase B (DAPB) of Metarhizium robertsii (strain ARSEF 23 / ATCC MYA-3075) (Metarhizium anisopliae (strain ARSEF 23)).